The following is a 267-amino-acid chain: MEAKMNLHVCALALLLFGSIATVRGRAVDLVDDSNDVDNSIEAEEEKPRNRAFEADWLKFTKTPPTKLQQADGATIEIVCEMMGSQVPSIQWVVGHLPRSELDDLDSNQVAEEAPSAIVRVRSSHIIDHVLSEARTYTCVGRTGSKTIYASTVVHPPRSSRLTPEKTYPGAQKPRIIYTEKTHLDLMGSNIQLPCRVHARPRAEITWLNNENKEIVQGHRHRVLANGDLLISEIKWEDMGNYKCIARNVVGKDTADTFVYPVLNEED.

The signal sequence occupies residues 1–25 (MEAKMNLHVCALALLLFGSIATVRG). Ig-like C2-type domains lie at 48-149 (PRNR…KTIY) and 174-260 (PRII…TFVY). Disulfide bonds link cysteine 80–cysteine 139 and cysteine 195–cysteine 244.

Detected in several sites including the ventral neuroectoderm, the tracheal pits, the pharynx and esophagus, and specific neuronal cell bodies, where it is primarily expressed.

Its subcellular location is the secreted. The protein localises to the extracellular space. Functionally, essential developmental role during embryogenesis, in particular the normal development of the nervous system. May be involved in some aspect of cell adhesion. This is Neural/ectodermal development factor IMP-L2 (ImpL2) from Drosophila melanogaster (Fruit fly).